Consider the following 204-residue polypeptide: Cytochrome c oxidase subunit 3 (204 aa).

The next 5 helical transmembrane spans lie at 12 to 32 (YGNLLLMLGFLLMIMTMIQWW), 56 to 76 (GMMLFIVSEICFFFAFFWAYF), 101 to 121 (FQIPLLNTAILLSSGVSVTWA), 133 to 153 (AIHSMTITITLGFYFTFLQMM), and 171 to 191 (FFVATGFHGLHVIIGSTFLFM).

It belongs to the cytochrome c oxidase subunit 3 family. Component of the cytochrome c oxidase (complex IV, CIV), a multisubunit enzyme composed of a catalytic core of 3 subunits and several supernumerary subunits. The complex exists as a monomer or a dimer and forms supercomplexes (SCs) in the inner mitochondrial membrane with ubiquinol-cytochrome c oxidoreductase (cytochrome b-c1 complex, complex III, CIII).

It is found in the mitochondrion inner membrane. The enzyme catalyses 4 Fe(II)-[cytochrome c] + O2 + 8 H(+)(in) = 4 Fe(III)-[cytochrome c] + 2 H2O + 4 H(+)(out). Its function is as follows. Component of the cytochrome c oxidase, the last enzyme in the mitochondrial electron transport chain which drives oxidative phosphorylation. The respiratory chain contains 3 multisubunit complexes succinate dehydrogenase (complex II, CII), ubiquinol-cytochrome c oxidoreductase (cytochrome b-c1 complex, complex III, CIII) and cytochrome c oxidase (complex IV, CIV), that cooperate to transfer electrons derived from NADH and succinate to molecular oxygen, creating an electrochemical gradient over the inner membrane that drives transmembrane transport and the ATP synthase. Cytochrome c oxidase is the component of the respiratory chain that catalyzes the reduction of oxygen to water. Electrons originating from reduced cytochrome c in the intermembrane space (IMS) are transferred via the dinuclear copper A center (CU(A)) of subunit 2 and heme A of subunit 1 to the active site in subunit 1, a binuclear center (BNC) formed by heme A3 and copper B (CU(B)). The BNC reduces molecular oxygen to 2 water molecules using 4 electrons from cytochrome c in the IMS and 4 protons from the mitochondrial matrix. The protein is Cytochrome c oxidase subunit 3 (COIII) of Enteroctopus dofleini (North Pacific giant octopus).